Reading from the N-terminus, the 460-residue chain is Putative RNA-guided DNA endonuclease MT2953 (460 aa).

Catalysis depends on residues aspartate 224 and glutamate 313. Zn(2+) is bound by residues cysteine 372, cysteine 375, cysteine 389, and cysteine 392. Aspartate 399 is an active-site residue. Residues valine 415–lysine 460 form a disordered region.

In the N-terminal section; belongs to the transposase 2 family. The protein in the C-terminal section; belongs to the transposase 35 family.

An RNA-guided dsDNA endonuclease. When guided by an RNA derived from the right-end element of its insertion sequence element (IS), cleaves DNA downstream of the transposon-associated motif (TAM). Cleaves supercoiled and linear DNA in a staggered manner 15-21 bases from the TAM yielding 5'-overhangs. Binds reRNA, an approximately 150 nucleotide base sRNA derived from the 3' end of its own gene, the right end (RE) of the insertion sequence (IS) plus sequence downstream of the IS. This chain is Putative RNA-guided DNA endonuclease MT2953, found in Mycobacterium tuberculosis (strain CDC 1551 / Oshkosh).